The primary structure comprises 1057 residues: Adenylate-forming reductase stbB (1057 aa).

The interval 21–378 is adenylation (A) domain; sequence STKRQPGAVC…FRLRTDMNFE (358 aa). Residues H251, 344–345, T349, and 423–426 each bind AMP; these read NF and AVGR. A Carrier domain is found at 564 to 651; that stretch reads ETLEEDIKAL…QMAAAIKNPS (88 aa). An O-(pantetheine 4'-phosphoryl)serine modification is found at S600. The interval 693 to 1025 is reductase (R) domain; that stretch reads IVVVTGSSGS…SGAVILGTDV (333 aa). NADP(+)-binding positions include 700-703, 783-785, Y858, and K862; these read SGSL and AAW.

It belongs to the adenylate-forming reductase family.

It carries out the reaction ilicicolinate B + AH2 + ATP = ilicicolin B + A + AMP + diphosphate. Its pathway is secondary metabolite biosynthesis; terpenoid biosynthesis. Functionally, nonribosomal peptide synthase-like protein; part of the cluster that mediates the biosynthesis of LL-Z1272-beta, also known as ilicicolin B, a prenylated aryl-aldehyde produced by several fungi and that serves as a key pathway intermediate for many fungal meroterpenoids. The first step in the pathway is performed by the non-reducing polyketide synthase stbA that produces orsellinic acid by condensing acetyl-CoA with 3 malonyl-CoA units. The prenyltransferase stbC then prenylates orsenilic acid into grifolic acid. Finally, grifolic acid is reduced to ilicicolin B by the NRPS-like protein stbB. The polypeptide is Adenylate-forming reductase stbB (Stachybotrys bisbyi (Hyalostachybotrys bisbyi)).